Here is a 76-residue protein sequence, read N- to C-terminus: Small ribosomal subunit protein bS18 (76 aa).

This sequence belongs to the bacterial ribosomal protein bS18 family. In terms of assembly, part of the 30S ribosomal subunit. Forms a tight heterodimer with protein bS6.

Functionally, binds as a heterodimer with protein bS6 to the central domain of the 16S rRNA, where it helps stabilize the platform of the 30S subunit. The sequence is that of Small ribosomal subunit protein bS18 from Xanthomonas euvesicatoria pv. vesicatoria (strain 85-10) (Xanthomonas campestris pv. vesicatoria).